A 169-amino-acid chain; its full sequence is S-ribosylhomocysteine lyase (169 aa).

The Fe cation site is built by H54, H58, and C128.

It belongs to the LuxS family. As to quaternary structure, homodimer. Fe cation is required as a cofactor.

It carries out the reaction S-(5-deoxy-D-ribos-5-yl)-L-homocysteine = (S)-4,5-dihydroxypentane-2,3-dione + L-homocysteine. Its function is as follows. Involved in the synthesis of autoinducer 2 (AI-2) which is secreted by bacteria and is used to communicate both the cell density and the metabolic potential of the environment. The regulation of gene expression in response to changes in cell density is called quorum sensing. Catalyzes the transformation of S-ribosylhomocysteine (RHC) to homocysteine (HC) and 4,5-dihydroxy-2,3-pentadione (DPD). The polypeptide is S-ribosylhomocysteine lyase (Shewanella sediminis (strain HAW-EB3)).